Reading from the N-terminus, the 244-residue chain is Ribonuclease 3 (244 aa).

Positions 21-148 (DHAPLLEAWG…MLGAIYLHHG (128 aa)) constitute an RNase III domain. Residue Glu-61 participates in Mg(2+) binding. Residue Asp-65 is part of the active site. The Mg(2+) site is built by Asp-134 and Glu-137. Glu-137 is an active-site residue. The 68-residue stretch at 175 to 242 (DWKTVLLEKL…AKQAVQKLNE (68 aa)) folds into the DRBM domain.

Belongs to the ribonuclease III family. In terms of assembly, homodimer. Mg(2+) is required as a cofactor.

The protein localises to the cytoplasm. It catalyses the reaction Endonucleolytic cleavage to 5'-phosphomonoester.. Digests double-stranded RNA. Involved in the processing of primary rRNA transcript to yield the immediate precursors to the large and small rRNAs (23S and 16S). Processes some mRNAs, and tRNAs when they are encoded in the rRNA operon. Processes pre-crRNA and tracrRNA of type II CRISPR loci if present in the organism. This is Ribonuclease 3 from Corynebacterium jeikeium (strain K411).